The primary structure comprises 155 residues: MAKKNTENNTLADNRKAWHDYFIEETYECGVELVGTEVKSIKNGKANLKDSYAEIRNGEVFACNMHVSPYKEGNIFNVDPLRKRRLLLHKSEIDKLLGFTSQKGYTLVPIALYLKNRRVKVKLAVAVGKKNYDKRDALKEKDARREIDRAMKNNR.

The protein belongs to the SmpB family.

The protein resides in the cytoplasm. Functionally, required for rescue of stalled ribosomes mediated by trans-translation. Binds to transfer-messenger RNA (tmRNA), required for stable association of tmRNA with ribosomes. tmRNA and SmpB together mimic tRNA shape, replacing the anticodon stem-loop with SmpB. tmRNA is encoded by the ssrA gene; the 2 termini fold to resemble tRNA(Ala) and it encodes a 'tag peptide', a short internal open reading frame. During trans-translation Ala-aminoacylated tmRNA acts like a tRNA, entering the A-site of stalled ribosomes, displacing the stalled mRNA. The ribosome then switches to translate the ORF on the tmRNA; the nascent peptide is terminated with the 'tag peptide' encoded by the tmRNA and targeted for degradation. The ribosome is freed to recommence translation, which seems to be the essential function of trans-translation. The chain is SsrA-binding protein from Clostridium acetobutylicum (strain ATCC 824 / DSM 792 / JCM 1419 / IAM 19013 / LMG 5710 / NBRC 13948 / NRRL B-527 / VKM B-1787 / 2291 / W).